We begin with the raw amino-acid sequence, 493 residues long: Lysine--tRNA ligase (493 aa).

Residues glutamate 403 and glutamate 410 each contribute to the Mg(2+) site.

This sequence belongs to the class-II aminoacyl-tRNA synthetase family. In terms of assembly, homodimer. It depends on Mg(2+) as a cofactor.

Its subcellular location is the cytoplasm. It catalyses the reaction tRNA(Lys) + L-lysine + ATP = L-lysyl-tRNA(Lys) + AMP + diphosphate. The chain is Lysine--tRNA ligase from Wigglesworthia glossinidia brevipalpis.